The primary structure comprises 239 residues: MAVLKSWLSRSVTLLFRYRQCLCVPVVANFKKRCFSELIRPWHKTVTVGFGVTLCAVPIAQKSEPHSLSSEALMRRAVSLVTDSTSTFLSQTTYALIEAITEYTKAVYTLTSLYRQYTSLLGKMNSQEEDEVWQVIIGARAEMTSKHQEYLKLETTWMTAVGLSEMAAEAAYQTGADQAPITARNHIQLVKLQVEEVHQLSRKAETKLAEAQIEELRQKTQEEGEERAESEQEAYLRED.

The transit peptide at Met1–Leu22 directs the protein to the mitochondrion. Residues Ala56–Ala60 carry the IAP-binding motif. The disordered stretch occupies residues Arg217–Asp239.

It belongs to the Smac/DIABLO protein family. As to quaternary structure, homodimer. Interacts with BEX3. Interacts with BIRC2/c-IAP1 (via BIR3 domain). Interacts with BIRC6/BRUCE. Interacts with BIRC7/livin. Interacts with XIAP/BIRC4 (via BIR3 domain). Interacts with the monomeric and dimeric form of BIRC5/survivin. Interacts with AREL1 (via HECT domain); in the cytoplasm following induction of apoptosis. Ubiquitinated by BIRC7/livin. Ubiquitinated by BIRC6. In terms of processing, the precursor form is proteolytically cleaved by mitochondrial processing peptidase MPP to remove the transit peptide and produce an intermediate form. This is then processed by PARL to produce the mature cleaved form which is released from mitochondria into the cytosol in apoptotic cells.

Its subcellular location is the mitochondrion. It is found in the cytoplasm. The protein localises to the cytosol. Promotes apoptosis by activating caspases in the cytochrome c/Apaf-1/caspase-9 pathway. Acts by opposing the inhibitory activity of inhibitor of apoptosis proteins (IAP). Inhibits the activity of BIRC6/BRUCE by inhibiting its binding to caspases. The chain is Diablo IAP-binding mitochondrial protein from Pongo abelii (Sumatran orangutan).